Consider the following 384-residue polypeptide: 1-deoxy-D-xylulose 5-phosphate reductoisomerase (384 aa).

NADPH is bound by residues Thr10, Gly11, Ser12, Ile13, Gly36, Lys37, Asn38, and Asn121. 1-deoxy-D-xylulose 5-phosphate is bound at residue Lys122. Glu123 serves as a coordination point for NADPH. Asp147 serves as a coordination point for Mn(2+). Positions 148, 149, 173, and 196 each coordinate 1-deoxy-D-xylulose 5-phosphate. Residue Glu149 coordinates Mn(2+). Residue Gly202 coordinates NADPH. The 1-deoxy-D-xylulose 5-phosphate site is built by Ser209, Asn214, Lys215, and Glu218. A Mn(2+)-binding site is contributed by Glu218.

It belongs to the DXR family. Requires Mg(2+) as cofactor. Mn(2+) is required as a cofactor.

The catalysed reaction is 2-C-methyl-D-erythritol 4-phosphate + NADP(+) = 1-deoxy-D-xylulose 5-phosphate + NADPH + H(+). It functions in the pathway isoprenoid biosynthesis; isopentenyl diphosphate biosynthesis via DXP pathway; isopentenyl diphosphate from 1-deoxy-D-xylulose 5-phosphate: step 1/6. In terms of biological role, catalyzes the NADPH-dependent rearrangement and reduction of 1-deoxy-D-xylulose-5-phosphate (DXP) to 2-C-methyl-D-erythritol 4-phosphate (MEP). The sequence is that of 1-deoxy-D-xylulose 5-phosphate reductoisomerase from Exiguobacterium sibiricum (strain DSM 17290 / CCUG 55495 / CIP 109462 / JCM 13490 / 255-15).